The primary structure comprises 218 residues: Cytochrome b6 (218 aa).

Residues 35-55 (IFYCLGGITLVCFLIQFATGF) form a helical membrane-spanning segment. Residue C38 coordinates heme c. The heme b site is built by H89 and H103. Helical transmembrane passes span 93-113 (ASMM…TGGF), 119-139 (LTWV…VTGY), and 189-209 (LHTF…FLMI). Heme b-binding residues include H190 and H205.

This sequence belongs to the cytochrome b family. PetB subfamily. As to quaternary structure, the 4 large subunits of the cytochrome b6-f complex are cytochrome b6, subunit IV (17 kDa polypeptide, PetD), cytochrome f and the Rieske protein, while the 4 small subunits are PetG, PetL, PetM and PetN. The complex functions as a dimer. Requires heme b as cofactor. It depends on heme c as a cofactor.

Its subcellular location is the cellular thylakoid membrane. Functionally, component of the cytochrome b6-f complex, which mediates electron transfer between photosystem II (PSII) and photosystem I (PSI), cyclic electron flow around PSI, and state transitions. This Prochlorococcus marinus (strain MIT 9215) protein is Cytochrome b6.